Consider the following 527-residue polypeptide: Pentatricopeptide repeat-containing protein At4g25270, chloroplastic (527 aa).

The N-terminal 47 residues, M1 to L47, are a transit peptide targeting the chloroplast. The disordered stretch occupies residues S12–F44. Residues M21–R35 show a composition bias toward basic residues. 10 PPR repeats span residues N126–R156, S159–P193, D194–Y228, D229–K259, D260–P294, D295–W326, E327–S361, S367–P389, D390–P425, and K426–E457. A type E motif; degenerate region spans residues V462–T527.

This sequence belongs to the PPR family. PCMP-E subfamily.

Its subcellular location is the plastid. The protein resides in the chloroplast. This Arabidopsis thaliana (Mouse-ear cress) protein is Pentatricopeptide repeat-containing protein At4g25270, chloroplastic (PCMP-E53).